Reading from the N-terminus, the 565-residue chain is Phosphomethylpyrimidine synthase (565 aa).

Substrate-binding positions include Asn-203, Met-232, Tyr-261, His-297, 317-319, 358-361, and Glu-397; these read SRG and DGLR. Position 401 (His-401) interacts with Zn(2+). Tyr-424 contacts substrate. His-465 lines the Zn(2+) pocket. Residues Cys-541, Cys-544, and Cys-549 each coordinate [4Fe-4S] cluster.

It belongs to the ThiC family. Requires [4Fe-4S] cluster as cofactor.

It catalyses the reaction 5-amino-1-(5-phospho-beta-D-ribosyl)imidazole + S-adenosyl-L-methionine = 4-amino-2-methyl-5-(phosphooxymethyl)pyrimidine + CO + 5'-deoxyadenosine + formate + L-methionine + 3 H(+). Its pathway is cofactor biosynthesis; thiamine diphosphate biosynthesis. Catalyzes the synthesis of the hydroxymethylpyrimidine phosphate (HMP-P) moiety of thiamine from aminoimidazole ribotide (AIR) in a radical S-adenosyl-L-methionine (SAM)-dependent reaction. This is Phosphomethylpyrimidine synthase from Bacteroides thetaiotaomicron (strain ATCC 29148 / DSM 2079 / JCM 5827 / CCUG 10774 / NCTC 10582 / VPI-5482 / E50).